A 378-amino-acid chain; its full sequence is Cytochrome b (378 aa).

Helical transmembrane passes span 34 to 54 (FGSLLGLCLIIQILTGLFLAM), 78 to 99 (WLLRTLHANGASFFFICIYLHV), 114 to 134 (WLIGVIILFLVMGTAFMGYVL), and 179 to 199 (FFTFHFILPFIVLAMTMIHLL). The heme b site is built by histidine 84 and histidine 98. Heme b contacts are provided by histidine 183 and histidine 197. Position 202 (histidine 202) interacts with a ubiquinone. 4 helical membrane passes run 227 to 247 (FKDIVGFTVMIFILISLVLIS), 289 to 309 (LGGVIALVLSIAILMILPFYN), 321 to 341 (INQVMFWSMLVTVILLTWIGA), and 348 to 368 (YVLIGQILTVMYFLYYLVNPL).

This sequence belongs to the cytochrome b family. The main subunits of complex b-c1 are: cytochrome b, cytochrome c1 and the Rieske protein. Heme b serves as cofactor.

Its subcellular location is the mitochondrion inner membrane. Component of the ubiquinol-cytochrome c reductase complex (complex III or cytochrome b-c1 complex) that is part of the mitochondrial respiratory chain. The b-c1 complex mediates electron transfer from ubiquinol to cytochrome c. Contributes to the generation of a proton gradient across the mitochondrial membrane that is then used for ATP synthesis. The chain is Cytochrome b (mt:Cyt-b) from Drosophila sechellia (Fruit fly).